Here is a 157-residue protein sequence, read N- to C-terminus: Large ribosomal subunit protein uL11 (157 aa).

Disordered stretches follow at residues 1 to 28 (MAGT…GPTP) and 138 to 157 (NNPR…DILK). Basic and acidic residues predominate over residues 139–157 (NPREFKSRMEDGEYDDILK).

This sequence belongs to the universal ribosomal protein uL11 family. In terms of assembly, part of the ribosomal stalk of the 50S ribosomal subunit. Interacts with L10 and the large rRNA to form the base of the stalk. L10 forms an elongated spine to which L12 dimers bind in a sequential fashion forming a multimeric L10(L12)X complex.

In terms of biological role, forms part of the ribosomal stalk which helps the ribosome interact with GTP-bound translation factors. This chain is Large ribosomal subunit protein uL11, found in Haloquadratum walsbyi (strain DSM 16790 / HBSQ001).